The primary structure comprises 254 residues: Alcohol dehydrogenase (254 aa).

9-32 contributes to the NAD(+) binding site; that stretch reads IFVAGLGGIGLDTSRELVKRDLKN. Ser-138 contacts substrate. Tyr-151 functions as the Proton acceptor in the catalytic mechanism.

This sequence belongs to the short-chain dehydrogenases/reductases (SDR) family. As to quaternary structure, homodimer.

It carries out the reaction a primary alcohol + NAD(+) = an aldehyde + NADH + H(+). The enzyme catalyses a secondary alcohol + NAD(+) = a ketone + NADH + H(+). The chain is Alcohol dehydrogenase (Adh) from Drosophila paulistorum (Fruit fly).